The sequence spans 124 residues: MLSPDLPDSAWNTRLLCRVMLCLLGAGSVAAGVIQSPRHLIKEKRETATLKCYPIPRHDTVYWYQQGPGQDPQFLISFYEKMQSDKGSIPDRFSAQQFSDYHSELNMSSLELGDSALYFCASSL.

Residues 1–31 (MLSPDLPDSAWNTRLLCRVMLCLLGAGSVAA) form the signal peptide. An Ig-like domain is found at 32–124 (GVIQSPRHLI…SALYFCASSL (93 aa)). A disulfide bridge links C52 with C120. N106 carries an N-linked (GlcNAc...) asparagine glycan.

As to quaternary structure, alpha-beta TR is a heterodimer composed of an alpha and beta chain; disulfide-linked. The alpha-beta TR is associated with the transmembrane signaling CD3 coreceptor proteins to form the TR-CD3 (TcR or TCR). The assembly of alpha-beta TR heterodimers with CD3 occurs in the endoplasmic reticulum where a single alpha-beta TR heterodimer associates with one CD3D-CD3E heterodimer, one CD3G-CD3E heterodimer and one CD247 homodimer forming a stable octameric structure. CD3D-CD3E and CD3G-CD3E heterodimers preferentially associate with TR alpha and TR beta chains, respectively. The association of the CD247 homodimer is the last step of TcR assembly in the endoplasmic reticulum and is required for transport to the cell surface.

Its subcellular location is the cell membrane. In terms of biological role, v region of the variable domain of T cell receptor (TR) beta chain that participates in the antigen recognition. Alpha-beta T cell receptors are antigen specific receptors which are essential to the immune response and are present on the cell surface of T lymphocytes. Recognize peptide-major histocompatibility (MH) (pMH) complexes that are displayed by antigen presenting cells (APC), a prerequisite for efficient T cell adaptive immunity against pathogens. Binding of alpha-beta TR to pMH complex initiates TR-CD3 clustering on the cell surface and intracellular activation of LCK that phosphorylates the ITAM motifs of CD3G, CD3D, CD3E and CD247 enabling the recruitment of ZAP70. In turn ZAP70 phosphorylates LAT, which recruits numerous signaling molecules to form the LAT signalosome. The LAT signalosome propagates signal branching to three major signaling pathways, the calcium, the mitogen-activated protein kinase (MAPK) kinase and the nuclear factor NF-kappa-B (NF-kB) pathways, leading to the mobilization of transcription factors that are critical for gene expression and essential for T cell growth and differentiation. The T cell repertoire is generated in the thymus, by V-(D)-J rearrangement. This repertoire is then shaped by intrathymic selection events to generate a peripheral T cell pool of self-MH restricted, non-autoaggressive T cells. Post-thymic interaction of alpha-beta TR with the pMH complexes shapes TR structural and functional avidity. In Homo sapiens (Human), this protein is T cell receptor beta variable 13.